The primary structure comprises 664 residues: DNA ligase (664 aa).

NAD(+)-binding positions include 31-35 (DSTYD), 80-81 (SL), and E110. The N6-AMP-lysine intermediate role is filled by K112. Residues R133, E167, K282, and K306 each contribute to the NAD(+) site. Residues C400, C403, C418, and C423 each contribute to the Zn(2+) site. The region spanning 583 to 664 (QSNAPLAGKT…LLEELAKYEG (82 aa)) is the BRCT domain.

It belongs to the NAD-dependent DNA ligase family. LigA subfamily. It depends on Mg(2+) as a cofactor. Requires Mn(2+) as cofactor.

The enzyme catalyses NAD(+) + (deoxyribonucleotide)n-3'-hydroxyl + 5'-phospho-(deoxyribonucleotide)m = (deoxyribonucleotide)n+m + AMP + beta-nicotinamide D-nucleotide.. Its function is as follows. DNA ligase that catalyzes the formation of phosphodiester linkages between 5'-phosphoryl and 3'-hydroxyl groups in double-stranded DNA using NAD as a coenzyme and as the energy source for the reaction. It is essential for DNA replication and repair of damaged DNA. In Exiguobacterium sibiricum (strain DSM 17290 / CCUG 55495 / CIP 109462 / JCM 13490 / 255-15), this protein is DNA ligase.